A 393-amino-acid polypeptide reads, in one-letter code: Elongation factor Tu (393 aa).

The tr-type G domain maps to 6-204 (KPHINVGTIG…ALEKIELPMR (199 aa)). The tract at residues 15–22 (GHVDHGKT) is G1. Residue 15–22 (GHVDHGKT) coordinates GTP. Thr22 lines the Mg(2+) pocket. The interval 58-62 (GITIS) is G2. The tract at residues 79–82 (DCPG) is G3. Residues 79–83 (DCPGH) and 134–137 (NKCD) each bind GTP. Residues 134 to 137 (NKCD) form a G4 region. The interval 172–174 (SAV) is G5.

The protein belongs to the TRAFAC class translation factor GTPase superfamily. Classic translation factor GTPase family. EF-Tu/EF-1A subfamily. Monomer.

The protein localises to the cytoplasm. The catalysed reaction is GTP + H2O = GDP + phosphate + H(+). In terms of biological role, GTP hydrolase that promotes the GTP-dependent binding of aminoacyl-tRNA to the A-site of ribosomes during protein biosynthesis. This is Elongation factor Tu from Anaplasma phagocytophilum (strain HZ).